A 147-amino-acid chain; its full sequence is Large ribosomal subunit protein uL15 (147 aa).

A compositionally biased stretch (basic and acidic residues) spans 1–13 (MRLHDLKPAEGAR). Residues 1–58 (MRLHDLKPAEGARRERKRVGRGIGSGHGKTSGRGQKGQKARSGGGVRPGFEGGQMPLT) form a disordered region. 2 stretches are compositionally biased toward gly residues: residues 21–35 (RGIGSGHGKTSGRGQ) and 42–52 (SGGGVRPGFEG).

The protein belongs to the universal ribosomal protein uL15 family. In terms of assembly, part of the 50S ribosomal subunit.

In terms of biological role, binds to the 23S rRNA. The protein is Large ribosomal subunit protein uL15 of Thermoanaerobacter sp. (strain X514).